The sequence spans 211 residues: Adenylyl-sulfate kinase (211 aa).

ATP is bound at residue 32–39 (GLSASGKS). Ser-107 acts as the Phosphoserine intermediate in catalysis.

This sequence belongs to the APS kinase family. Homodimer.

It catalyses the reaction adenosine 5'-phosphosulfate + ATP = 3'-phosphoadenylyl sulfate + ADP + H(+). It functions in the pathway sulfur metabolism; hydrogen sulfide biosynthesis; sulfite from sulfate: step 2/3. Catalyzes the synthesis of activated sulfate. The chain is Adenylyl-sulfate kinase from Penicillium chrysogenum (Penicillium notatum).